The sequence spans 229 residues: Urease accessory protein UreF (229 aa).

This sequence belongs to the UreF family. In terms of assembly, ureD, UreF and UreG form a complex that acts as a GTP-hydrolysis-dependent molecular chaperone, activating the urease apoprotein by helping to assemble the nickel containing metallocenter of UreC. The UreE protein probably delivers the nickel.

Its subcellular location is the cytoplasm. In terms of biological role, required for maturation of urease via the functional incorporation of the urease nickel metallocenter. This Ralstonia pickettii (strain 12J) protein is Urease accessory protein UreF.